Here is an 89-residue protein sequence, read N- to C-terminus: Small ribosomal subunit protein uS15 (89 aa).

The span at 1-10 (MPLNTEKKQE) shows a compositional bias: basic and acidic residues. Residues 1-22 (MPLNTEKKQELINSHQTHATDT) form a disordered region. Polar residues predominate over residues 11–22 (LINSHQTHATDT).

The protein belongs to the universal ribosomal protein uS15 family. Part of the 30S ribosomal subunit. Forms a bridge to the 50S subunit in the 70S ribosome, contacting the 23S rRNA.

Its function is as follows. One of the primary rRNA binding proteins, it binds directly to 16S rRNA where it helps nucleate assembly of the platform of the 30S subunit by binding and bridging several RNA helices of the 16S rRNA. Forms an intersubunit bridge (bridge B4) with the 23S rRNA of the 50S subunit in the ribosome. This Synechococcus sp. (strain RCC307) protein is Small ribosomal subunit protein uS15.